The chain runs to 264 residues: Heavy metal-associated isoprenylated plant protein 17 (264 aa).

HMA domains are found at residues 32–95 (VTDA…KKIE) and 133–204 (IMEV…KERQ). Positions 185–218 (SRKLNKKMHQKIKKAEKERQEWESEMMLREAEEE) form a coiled coil. Cysteine 261 carries the cysteine methyl ester modification. Cysteine 261 carries S-farnesyl cysteine lipidation. A propeptide spans 262–264 (SIS) (removed in mature form).

The protein belongs to the HIPP family.

Probable heavy-metal-binding protein. This chain is Heavy metal-associated isoprenylated plant protein 17, found in Arabidopsis thaliana (Mouse-ear cress).